The following is a 374-amino-acid chain: Bifunctional enzyme IspD/IspF (374 aa).

Residues 1–213 (MLDVTLIVLC…PCLKAPSNNF (213 aa)) form a 2-C-methyl-D-erythritol 4-phosphate cytidylyltransferase region. Residues 214 to 374 (FTGTGFDIHA…TLKYYNWKKR (161 aa)) are 2-C-methyl-D-erythritol 2,4-cyclodiphosphate synthase. Residues D220 and H222 each coordinate a divalent metal cation. 4-CDP-2-C-methyl-D-erythritol 2-phosphate-binding positions include 220 to 222 (DIH) and 246 to 247 (HS). Residue H254 coordinates a divalent metal cation. Residues 268-270 (DIG), 273-277 (FPDTD), 344-347 (TTAE), F351, and R354 contribute to the 4-CDP-2-C-methyl-D-erythritol 2-phosphate site.

In the N-terminal section; belongs to the IspD/TarI cytidylyltransferase family. IspD subfamily. The protein in the C-terminal section; belongs to the IspF family. A divalent metal cation is required as a cofactor.

The enzyme catalyses 2-C-methyl-D-erythritol 4-phosphate + CTP + H(+) = 4-CDP-2-C-methyl-D-erythritol + diphosphate. It catalyses the reaction 4-CDP-2-C-methyl-D-erythritol 2-phosphate = 2-C-methyl-D-erythritol 2,4-cyclic diphosphate + CMP. It functions in the pathway isoprenoid biosynthesis; isopentenyl diphosphate biosynthesis via DXP pathway; isopentenyl diphosphate from 1-deoxy-D-xylulose 5-phosphate: step 2/6. The protein operates within isoprenoid biosynthesis; isopentenyl diphosphate biosynthesis via DXP pathway; isopentenyl diphosphate from 1-deoxy-D-xylulose 5-phosphate: step 4/6. Its function is as follows. Bifunctional enzyme that catalyzes the formation of 4-diphosphocytidyl-2-C-methyl-D-erythritol from CTP and 2-C-methyl-D-erythritol 4-phosphate (MEP) (IspD), and catalyzes the conversion of 4-diphosphocytidyl-2-C-methyl-D-erythritol 2-phosphate (CDP-ME2P) to 2-C-methyl-D-erythritol 2,4-cyclodiphosphate (ME-CPP) with a corresponding release of cytidine 5-monophosphate (CMP) (IspF). The chain is Bifunctional enzyme IspD/IspF from Aliarcobacter butzleri (strain RM4018) (Arcobacter butzleri).